The sequence spans 370 residues: uncharacterized protein (370 aa).

Methionine 1 is modified (N-acetylmethionine).

The protein belongs to the ornithine cyclodeaminase/mu-crystallin family.

This is an uncharacterized protein from Saccharomyces cerevisiae (strain ATCC 204508 / S288c) (Baker's yeast).